A 417-amino-acid polypeptide reads, in one-letter code: UDP-N-acetylglucosamine 1-carboxyvinyltransferase (417 aa).

22–23 (KN) is a binding site for phosphoenolpyruvate. UDP-N-acetyl-alpha-D-glucosamine is bound at residue Arg93. Cys117 serves as the catalytic Proton donor. At Cys117 the chain carries 2-(S-cysteinyl)pyruvic acid O-phosphothioketal. Residues 122 to 126 (RPVDQ), Asp305, and Ile327 each bind UDP-N-acetyl-alpha-D-glucosamine.

It belongs to the EPSP synthase family. MurA subfamily.

The protein localises to the cytoplasm. The enzyme catalyses phosphoenolpyruvate + UDP-N-acetyl-alpha-D-glucosamine = UDP-N-acetyl-3-O-(1-carboxyvinyl)-alpha-D-glucosamine + phosphate. It participates in cell wall biogenesis; peptidoglycan biosynthesis. In terms of biological role, cell wall formation. Adds enolpyruvyl to UDP-N-acetylglucosamine. The protein is UDP-N-acetylglucosamine 1-carboxyvinyltransferase of Nitrosomonas eutropha (strain DSM 101675 / C91 / Nm57).